The primary structure comprises 318 residues: MAAREVFKRVIPPLSTRLHKGQSGRIGVVGGSLEYTGAPYYAAMAALYTGVDLCHVFCAQDAAPAIKCYSPELVVHPSIVSKRDCEHLNPVAIDNCIETAVDRMSPLLCRLDSLVVGPGLSRDPVMLAMAKRIVEKVISLGTPLVIDADGLCLVEQTPGLVMGYQNVILTPNTNEFKRLCHSVNIDASENCEVAAVQLSKALGSVTILCKGSKDLIATGDDILFVSDPTSLRRCGGQGDVLAGILCAFLAWRNGYQSGRWTAQDQSTDISLMIVASNASSFARKCAALAFEKHKRSIVASSILKEIGPAFDSLYDDEL.

One can recognise a YjeF C-terminal domain in the interval A3–L313. (6S)-NADPHX-binding positions include G119 and N172–R178. Residues K210–D214 and T229–G238 each bind ATP. Residue D239 participates in (6S)-NADPHX binding.

Belongs to the NnrD/CARKD family. It depends on Mg(2+) as a cofactor.

The protein localises to the cytoplasm. The enzyme catalyses (6S)-NADHX + ATP = ADP + phosphate + NADH + H(+). It carries out the reaction (6S)-NADPHX + ATP = ADP + phosphate + NADPH + H(+). Its function is as follows. Catalyzes the dehydration of the S-form of NAD(P)HX at the expense of ATP, which is converted to ADP. Together with NAD(P)HX epimerase, which catalyzes the epimerization of the S- and R-forms, the enzyme allows the repair of both epimers of NAD(P)HX, a damaged form of NAD(P)H that is a result of enzymatic or heat-dependent hydration. The sequence is that of ATP-dependent (S)-NAD(P)H-hydrate dehydratase from Batrachochytrium dendrobatidis (strain JAM81 / FGSC 10211) (Frog chytrid fungus).